A 100-amino-acid polypeptide reads, in one-letter code: Large ribosomal subunit protein uL23 (100 aa).

Belongs to the universal ribosomal protein uL23 family. In terms of assembly, part of the 50S ribosomal subunit. Contacts protein L29, and trigger factor when it is bound to the ribosome.

Functionally, one of the early assembly proteins it binds 23S rRNA. One of the proteins that surrounds the polypeptide exit tunnel on the outside of the ribosome. Forms the main docking site for trigger factor binding to the ribosome. The sequence is that of Large ribosomal subunit protein uL23 from Shewanella piezotolerans (strain WP3 / JCM 13877).